The chain runs to 431 residues: Adenylosuccinate synthetase (431 aa).

Residues 12-18 and 40-42 contribute to the GTP site; these read GDEGKGK and GHT. The Proton acceptor role is filled by Asp13. Asp13 and Gly40 together coordinate Mg(2+). IMP contacts are provided by residues 13-16, 38-41, Thr128, Arg142, Gln225, Thr240, and Arg304; these read DEGK and NAGH. His41 serves as the catalytic Proton donor. 300–306 is a substrate binding site; it reads TTTGRPR. Residues Arg306, 332-334, and 414-416 each bind GTP; these read KLD and GVG.

Belongs to the adenylosuccinate synthetase family. As to quaternary structure, homodimer. Mg(2+) serves as cofactor.

The protein resides in the cytoplasm. It carries out the reaction IMP + L-aspartate + GTP = N(6)-(1,2-dicarboxyethyl)-AMP + GDP + phosphate + 2 H(+). The protein operates within purine metabolism; AMP biosynthesis via de novo pathway; AMP from IMP: step 1/2. Plays an important role in the de novo pathway of purine nucleotide biosynthesis. Catalyzes the first committed step in the biosynthesis of AMP from IMP. This chain is Adenylosuccinate synthetase, found in Thermomicrobium roseum (strain ATCC 27502 / DSM 5159 / P-2).